We begin with the raw amino-acid sequence, 865 residues long: Cadherin-related family member 1 (865 aa).

Positions 1-23 are cleaved as a signal peptide; the sequence is MKHVRHFIPSLFLSLVHVCLVQA. Topologically, residues 24 to 705 are extracellular; that stretch reads NYAPYFFDNG…TKDNPMKALG (682 aa). 6 Cadherin domains span residues 38–137, 138–249, 250–356, 362–475, 476–579, and 571–690; these read NGNM…SPEF, INTP…PPMF, IGTP…PPTF, PQNR…VPKF, SSDY…SPEF, and DVND…GPMA. Residues 706–726 traverse the membrane as a helical segment; that stretch reads VLAGVMGIMVLITIMISTAMF. At 727 to 865 the chain is on the cytoplasmic side; that stretch reads WRNKRSNKIM…RNASMGEPHI (139 aa). The segment at 782-810 is disordered; the sequence is ENSNNNVQAAPVPPAAPLPPPPPALAASG. Over residues 792 to 805 the composition is skewed to pro residues; the sequence is PVPPAAPLPPPPPA.

The protein resides in the membrane. Its function is as follows. Potential calcium-dependent cell-adhesion protein. The polypeptide is Cadherin-related family member 1 (CDHR1) (Gallus gallus (Chicken)).